The primary structure comprises 347 residues: Palmitoyltransferase ZDHHC19 (347 aa).

Transmembrane regions (helical) follow at residues 29-49 (VFAA…FGFP) and 59-79 (WAFP…LVSL). Residues 112 to 162 (EWCPKCLFHRPPRTYHCPWCNICVEDFDHHCKWVNNCIGHRNFRLFMLLVL) enclose the DHHC domain. Cys-142 serves as the catalytic S-palmitoyl cysteine intermediate. Helical transmembrane passes span 156-176 (LFML…VTCL) and 194-214 (AILV…LLLI). Residues 275-347 (IQEKTKPSPP…PTAEPAAGDP (73 aa)) are disordered.

It belongs to the DHHC palmitoyltransferase family.

It localises to the golgi apparatus membrane. The protein localises to the cytoplasm. Its subcellular location is the perinuclear region. The enzyme catalyses L-cysteinyl-[protein] + hexadecanoyl-CoA = S-hexadecanoyl-L-cysteinyl-[protein] + CoA. Palmitoyltransferase that mediates palmitoylation oproteins, such as RRAS and SQSTM1. Catalyzes palmitoylation of RRAS, leading to increased cell viability. Acts as a positive regulator of autophagy by mediating palmitoylation of SQSTM1, promoting affinity between SQSTM1 and ATG8 proteins and recruitment of ubiquitinated cargo proteins to autophagosomes. In Mus musculus (Mouse), this protein is Palmitoyltransferase ZDHHC19 (Zdhhc19).